The following is an 803-amino-acid chain: E3 ubiquitin-protein ligase UHRF2 (803 aa).

Residues 1 to 78 (MWIQVRTIDG…IQLLVRPDSS (78 aa)) enclose the Ubiquitin-like domain. Polar residues-rich tracts occupy residues 79–96 (LPST…SSHN), 106–115 (GGSSSQPSTS), 167–181 (KNGS…NVNH), and 189–200 (KLDNVPSTSNSD). 2 disordered regions span residues 79–115 (LPST…PSTS) and 154–200 (RASD…SNSD). The required for interaction with histone H3 stretch occupies residues 118-312 (TCLIDPGFGL…VDEIFKIEKP (195 aa)). Residues 195–289 (STSNSDSVAA…KEVRVKVFLG (95 aa)) form an interaction with PCNP region. Residues 340-396 (DKTCHMCSCHKCGEKRDPNMQLLCDECNMAYHIYCLSPPLDKVPEEEYWYCPSCKTD) form a PHD-type zinc finger. Residues 415–645 (KMPSASTESR…LQYPAGYPSE (231 aa)) are methyl-CpG binding and interaction with HDAC1. Residues 449 to 613 (GPIPGIPVGS…FLVWRYLLRR (165 aa)) enclose the YDG domain. Positions 643–676 (PSEKEGKKTKGQSKKQGSEATKRPASDDECPGDS) are disordered. Basic and acidic residues predominate over residues 658–668 (QGSEATKRPAS). Ser668 bears the Phosphoserine mark. An RING-type zinc finger spans residues 734–773 (CVCCQELVYQPVTTECFHNVCKDCLQRSFKAQVFSCPACR).

As to quaternary structure, homodimer; disulfide-linked. Binds methylated CpG containing oligonucleotides. Interacts with H3; the interaction has a preference for the 'Lys-9' trimethylated form of H3 (H3K9me3). Interacts with PCNP. Interacts with HDAC1. Interacts directly with CCNE1; the interaction ubiquitinates CCNE1 and appears independent of CCNE1 phosphorylation. Interacts with CCND1; the interaction ubiquitinates CCND1 and appears independent of CCND1 phosphorylation. Interacts with p53/TP53 and RB1. Interacts with UBE2I. Interacts with ZNF618. Interacts with UHRF1. Interacts with FANCD2. Interacts with ATR. Interacts with PCNA. Post-translationally, may be autoubiquitinated; which may lead to proteasomal degradation. Phosphorylated. Phosphorylation may be mediated by CDK2. In terms of processing, autosumoylated. In terms of tissue distribution, mostly detected in several tissues, including the thymus, spleen, lung, adrenal gland, and ovary. In addition, found in several tissues in the brain (cerebellum, hippocampus, and cerebral cortex).

The protein resides in the nucleus. It localises to the chromosome. It catalyses the reaction S-ubiquitinyl-[E2 ubiquitin-conjugating enzyme]-L-cysteine + [acceptor protein]-L-lysine = [E2 ubiquitin-conjugating enzyme]-L-cysteine + N(6)-ubiquitinyl-[acceptor protein]-L-lysine.. The protein operates within protein modification; protein ubiquitination. Its activity is regulated as follows. E3 ligase activity is robustly activated by 5-hydroxy-methylcytosine. Functionally, E3 ubiquitin ligase that plays important roles in DNA methylation, histone modifications, cell cycle and DNA repair. Acts as a specific reader for 5-hydroxymethylcytosine (5hmC) and thereby recruits various substrates to these sites to ubiquitinate them. This activity also allows the maintenance of 5mC levels at specific genomic loci and regulates neuron-related gene expression. Participates in cell cycle regulation by ubiquitinating cyclins CCND1 and CCNE1 and thus inducing G1 arrest. Also ubiquitinates PCNP leading to its degradation by the proteasome. Plays an active role in DNA damage repair by ubiquitinating p21/CDKN1A leading to its proteasomal degradation. Also promotes DNA repair by acting as an interstrand cross-links (ICLs) sensor. Mechanistically, cooperates with UHRF1 to ensure recruitment of FANCD2 to ICLs, leading to FANCD2 monoubiquitination and subsequent activation. Contributes to UV-induced DNA damage response by physically interacting with ATR in response to irradiation, thereby promoting ATR activation. The chain is E3 ubiquitin-protein ligase UHRF2 (Uhrf2) from Mus musculus (Mouse).